Here is a 441-residue protein sequence, read N- to C-terminus: Ribosomal protein uS12 methylthiotransferase RimO (441 aa).

In terms of domain architecture, MTTase N-terminal spans P8 to P118. [4Fe-4S] cluster-binding residues include C17, C53, C82, C150, C154, and C157. The 238-residue stretch at L136 to E373 folds into the Radical SAM core domain. A TRAM domain is found at Q376 to V441.

Belongs to the methylthiotransferase family. RimO subfamily. [4Fe-4S] cluster is required as a cofactor.

It localises to the cytoplasm. The catalysed reaction is L-aspartate(89)-[ribosomal protein uS12]-hydrogen + (sulfur carrier)-SH + AH2 + 2 S-adenosyl-L-methionine = 3-methylsulfanyl-L-aspartate(89)-[ribosomal protein uS12]-hydrogen + (sulfur carrier)-H + 5'-deoxyadenosine + L-methionine + A + S-adenosyl-L-homocysteine + 2 H(+). In terms of biological role, catalyzes the methylthiolation of an aspartic acid residue of ribosomal protein uS12. This chain is Ribosomal protein uS12 methylthiotransferase RimO, found in Klebsiella pneumoniae subsp. pneumoniae (strain ATCC 700721 / MGH 78578).